Here is a 506-residue protein sequence, read N- to C-terminus: NAD(P)H-quinone oxidoreductase chain 4, chloroplastic (506 aa).

Transmembrane regions (helical) follow at residues 5 to 25 (FPLLTFITLFPISAGLLIPFL), 35 to 55 (WYTLIICLIDFVITSYIFIYK), 88 to 108 (MPLILLTSFITTLATLSAWPI), 114 to 134 (LFYFLMLAMYSGQLGVFLSQD), 135 to 155 (ILLFFLMWELELIPIYLLLSL), 168 to 188 (FILYTAVGSIFILMAGLTMAF), 209 to 229 (ALEIVLYLGFLIAFAVKLPAF), 243 to 263 (HYSTCMLLAGILIKMGGYGLI), 275 to 295 (VIFSPWIALIGGIQIIYGALT), 309 to 329 (SSISHMGFVMIGISSFTDLGL), 331 to 351 (GAMMQMVSHGLIGAGLFFLAG), 386 to 406 (SLALPGMSGFVAELMVFLGFL), 415 to 435 (FIALITFLEAVGIILTPIYLL), and 463 to 483 (IFIMSCLFLPIIGIGIYPNLT).

It belongs to the complex I subunit 4 family.

Its subcellular location is the plastid. It is found in the chloroplast thylakoid membrane. The catalysed reaction is a plastoquinone + NADH + (n+1) H(+)(in) = a plastoquinol + NAD(+) + n H(+)(out). It catalyses the reaction a plastoquinone + NADPH + (n+1) H(+)(in) = a plastoquinol + NADP(+) + n H(+)(out). In Chaetosphaeridium globosum (Charophycean green alga), this protein is NAD(P)H-quinone oxidoreductase chain 4, chloroplastic.